The chain runs to 130 residues: Protein ApaG (130 aa).

The ApaG domain occupies 3–127 (RALTRDIEVV…FSLDSPGLLR (125 aa)). A disordered region spans residues 63 to 83 (EVTGPGVVGEQPRLSPGDTYE).

This chain is Protein ApaG, found in Rhizobium etli (strain ATCC 51251 / DSM 11541 / JCM 21823 / NBRC 15573 / CFN 42).